Consider the following 323-residue polypeptide: Beta-ketoacyl-[acyl-carrier-protein] synthase III (323 aa).

Active-site residues include C112 and H250. The interval 251 to 255 (QANQR) is ACP-binding. N280 is a catalytic residue.

Belongs to the thiolase-like superfamily. FabH family. In terms of assembly, homodimer.

Its subcellular location is the cytoplasm. The enzyme catalyses malonyl-[ACP] + acetyl-CoA + H(+) = 3-oxobutanoyl-[ACP] + CO2 + CoA. It participates in lipid metabolism; fatty acid biosynthesis. Catalyzes the condensation reaction of fatty acid synthesis by the addition to an acyl acceptor of two carbons from malonyl-ACP. Catalyzes the first condensation reaction which initiates fatty acid synthesis and may therefore play a role in governing the total rate of fatty acid production. Possesses both acetoacetyl-ACP synthase and acetyl transacylase activities. Its substrate specificity determines the biosynthesis of branched-chain and/or straight-chain of fatty acids. In Oenococcus oeni (strain ATCC BAA-331 / PSU-1), this protein is Beta-ketoacyl-[acyl-carrier-protein] synthase III.